Here is a 335-residue protein sequence, read N- to C-terminus: Phospho-N-acetylmuramoyl-pentapeptide-transferase (335 aa).

The next 10 membrane-spanning stretches (helical) occupy residues 3–23, 53–73, 78–98, 118–138, 143–163, 174–194, 200–220, 226–246, 251–271, and 314–334; these read LTIL…PHFI, GGTV…LVYF, SLGL…IGFL, FTLQ…PSGI, VFGY…FWVV, GIDG…GVIA, FDVL…FLFN, IFMG…ISIA, WTLL…MLQV, and VDAF…AILY.

The protein belongs to the glycosyltransferase 4 family. MraY subfamily. It depends on Mg(2+) as a cofactor.

It localises to the cell membrane. It carries out the reaction UDP-N-acetyl-alpha-D-muramoyl-L-alanyl-gamma-D-glutamyl-L-lysyl-D-alanyl-D-alanine + di-trans,octa-cis-undecaprenyl phosphate = Mur2Ac(oyl-L-Ala-gamma-D-Glu-L-Lys-D-Ala-D-Ala)-di-trans,octa-cis-undecaprenyl diphosphate + UMP. It participates in cell wall biogenesis; peptidoglycan biosynthesis. Its function is as follows. Catalyzes the initial step of the lipid cycle reactions in the biosynthesis of the cell wall peptidoglycan: transfers peptidoglycan precursor phospho-MurNAc-pentapeptide from UDP-MurNAc-pentapeptide onto the lipid carrier undecaprenyl phosphate, yielding undecaprenyl-pyrophosphoryl-MurNAc-pentapeptide, known as lipid I. This chain is Phospho-N-acetylmuramoyl-pentapeptide-transferase, found in Streptococcus equi subsp. zooepidemicus (strain MGCS10565).